Here is a 70-residue protein sequence, read N- to C-terminus: Large ribosomal subunit protein bL31 (70 aa).

This sequence belongs to the bacterial ribosomal protein bL31 family. Type A subfamily. As to quaternary structure, part of the 50S ribosomal subunit.

Functionally, binds the 23S rRNA. The polypeptide is Large ribosomal subunit protein bL31 (Mycoplasma mobile (strain ATCC 43663 / 163K / NCTC 11711) (Mesomycoplasma mobile)).